Consider the following 204-residue polypeptide: Proteasome subunit beta type-3-A (204 aa).

Belongs to the peptidase T1B family. Component of the 20S core complex of the 26S proteasome. The 26S proteasome is composed of a core protease (CP), known as the 20S proteasome, capped at one or both ends by the 19S regulatory particle (RP/PA700). The 20S proteasome core is composed of 28 subunits that are arranged in four stacked rings, resulting in a barrel-shaped structure. The two end rings are each formed by seven alpha subunits, and the two central rings are each formed by seven beta subunits. The catalytic chamber with the active sites is on the inside of the barrel.

Its subcellular location is the cytoplasm. The protein resides in the nucleus. Functionally, non-catalytic component of the proteasome, a multicatalytic proteinase complex which is characterized by its ability to cleave peptides with Arg, Phe, Tyr, Leu, and Glu adjacent to the leaving group at neutral or slightly basic pH. The proteasome has an ATP-dependent proteolytic activity. In Arabidopsis thaliana (Mouse-ear cress), this protein is Proteasome subunit beta type-3-A (PBC1).